Here is a 237-residue protein sequence, read N- to C-terminus: DNA repair protein RecO (237 aa).

This sequence belongs to the RecO family.

Involved in DNA repair and RecF pathway recombination. This Rickettsia peacockii (strain Rustic) protein is DNA repair protein RecO.